The following is a 340-amino-acid chain: Replication initiation protein (340 aa).

Residues 38-58 (PERKRTKRRRGEHSTKPKCEN) are disordered.

The sequence is that of Replication initiation protein (repA1) from Escherichia coli.